Here is a 261-residue protein sequence, read N- to C-terminus: Gap junction beta-6 protein (261 aa).

At Met1–Lys22 the chain is on the cytoplasmic side. Residues Val23 to Gly45 traverse the membrane as a helical segment. Over Asp46 to Arg75 the chain is Extracellular. The helical transmembrane segment at Leu76 to Tyr98 threads the bilayer. The Cytoplasmic portion of the chain corresponds to Arg99–Ser131. A helical transmembrane segment spans residues Leu132–Phe154. Topologically, residues Tyr155–Thr192 are extracellular. A helical transmembrane segment spans residues Ile193–Leu215. Over Lys216–Ser261 the chain is Cytoplasmic.

Belongs to the connexin family. Beta-type (group I) subfamily. In terms of assembly, a connexon is composed of a hexamer of connexins. Interacts with CNST.

It localises to the cell membrane. The protein localises to the cell junction. It is found in the gap junction. Its function is as follows. One gap junction consists of a cluster of closely packed pairs of transmembrane channels, the connexons, through which materials of low MW diffuse from one cell to a neighboring cell. The polypeptide is Gap junction beta-6 protein (GJB6) (Bos taurus (Bovine)).